A 617-amino-acid chain; its full sequence is Proline--tRNA ligase (617 aa).

The protein belongs to the class-II aminoacyl-tRNA synthetase family. ProS type 1 subfamily. In terms of assembly, homodimer.

It localises to the cytoplasm. It catalyses the reaction tRNA(Pro) + L-proline + ATP = L-prolyl-tRNA(Pro) + AMP + diphosphate. Its function is as follows. Catalyzes the attachment of proline to tRNA(Pro) in a two-step reaction: proline is first activated by ATP to form Pro-AMP and then transferred to the acceptor end of tRNA(Pro). As ProRS can inadvertently accommodate and process non-cognate amino acids such as alanine and cysteine, to avoid such errors it has two additional distinct editing activities against alanine. One activity is designated as 'pretransfer' editing and involves the tRNA(Pro)-independent hydrolysis of activated Ala-AMP. The other activity is designated 'posttransfer' editing and involves deacylation of mischarged Ala-tRNA(Pro). The misacylated Cys-tRNA(Pro) is not edited by ProRS. This is Proline--tRNA ligase from Streptococcus pneumoniae serotype 4 (strain ATCC BAA-334 / TIGR4).